A 507-amino-acid chain; its full sequence is Arabinose import ATP-binding protein AraG (507 aa).

2 consecutive ABC transporter domains span residues 8 to 243 and 255 to 499; these read LSFH…MVGR and PHGE…MLRI. 40–47 is a binding site for ATP; it reads GENGAGKS.

It belongs to the ABC transporter superfamily. Arabinose importer (TC 3.A.1.2.2) family. The complex is composed of two ATP-binding proteins (AraG), two transmembrane proteins (AraH) and a solute-binding protein (AraF).

It localises to the cell inner membrane. It catalyses the reaction L-arabinose(out) + ATP + H2O = L-arabinose(in) + ADP + phosphate + H(+). Functionally, part of the ABC transporter complex AraFGH involved in arabinose import. Responsible for energy coupling to the transport system. The protein is Arabinose import ATP-binding protein AraG of Pectobacterium atrosepticum (strain SCRI 1043 / ATCC BAA-672) (Erwinia carotovora subsp. atroseptica).